The primary structure comprises 303 residues: UDP-N-acetylenolpyruvoylglucosamine reductase (303 aa).

The FAD-binding PCMH-type domain occupies 30 to 196 (IGGPADLLII…LEAVFKLKQD (167 aa)). R174 is an active-site residue. S225 functions as the Proton donor in the catalytic mechanism. Residue E295 is part of the active site.

The protein belongs to the MurB family. FAD is required as a cofactor.

The protein localises to the cytoplasm. The catalysed reaction is UDP-N-acetyl-alpha-D-muramate + NADP(+) = UDP-N-acetyl-3-O-(1-carboxyvinyl)-alpha-D-glucosamine + NADPH + H(+). It functions in the pathway cell wall biogenesis; peptidoglycan biosynthesis. Cell wall formation. This chain is UDP-N-acetylenolpyruvoylglucosamine reductase, found in Bacillus pumilus (strain SAFR-032).